Here is a 78-residue protein sequence, read N- to C-terminus: uncharacterized protein (78 aa).

Residues 1 to 27 form the signal peptide; the sequence is MQNSKTDMCAALWAVTGLVLNVAVRFA.

This is an uncharacterized protein from Dryophytes versicolor (chameleon treefrog).